We begin with the raw amino-acid sequence, 381 residues long: Putative glycosyltransferase EpsD (381 aa).

It belongs to the glycosyltransferase group 1 family. Glycosyltransferase 4 subfamily.

Its function is as follows. May be involved in the production of the exopolysaccharide (EPS) component of the extracellular matrix during biofilm formation. EPS is responsible for the adhesion of chains of cells into bundles. Required for biofilm maintenance. In Bacillus subtilis (strain 168), this protein is Putative glycosyltransferase EpsD (epsD).